Consider the following 492-residue polypeptide: N-succinylglutamate 5-semialdehyde dehydrogenase (492 aa).

220 to 225 (GSANTG) is a binding site for NAD(+). Active-site residues include Glu243 and Cys277.

This sequence belongs to the aldehyde dehydrogenase family. AstD subfamily.

It carries out the reaction N-succinyl-L-glutamate 5-semialdehyde + NAD(+) + H2O = N-succinyl-L-glutamate + NADH + 2 H(+). The protein operates within amino-acid degradation; L-arginine degradation via AST pathway; L-glutamate and succinate from L-arginine: step 4/5. Functionally, catalyzes the NAD-dependent reduction of succinylglutamate semialdehyde into succinylglutamate. The protein is N-succinylglutamate 5-semialdehyde dehydrogenase of Escherichia coli O139:H28 (strain E24377A / ETEC).